The chain runs to 102 residues: MYAIVMAGGKQYKVQEGATITVDLLAAEAGSEYVLDKVLMIGGGEAKIGAPYVAGAAVTCQVAGHVKGKKIVVFHKRRRKDSHKKQGHRQGYTQLKVTGIQA.

The protein belongs to the bacterial ribosomal protein bL21 family. As to quaternary structure, part of the 50S ribosomal subunit. Contacts protein L20.

In terms of biological role, this protein binds to 23S rRNA in the presence of protein L20. This chain is Large ribosomal subunit protein bL21, found in Solidesulfovibrio magneticus (strain ATCC 700980 / DSM 13731 / RS-1) (Desulfovibrio magneticus).